A 169-amino-acid polypeptide reads, in one-letter code: PTS system glucose-specific EIIA component (169 aa).

Residues 39-143 (DVVFAEKIVG…STLTPVVISN (105 aa)) form the PTS EIIA type-1 domain. The Zn(2+) site is built by H76 and H91. Catalysis depends on H91, which acts as the Tele-phosphohistidine intermediate; for EIIA activity. Residue H91 is modified to Phosphohistidine; by HPr.

As to quaternary structure, heterodimer with glycerol kinase (glpk). The cofactor is Zn(2+).

The protein localises to the cytoplasm. Its function is as follows. The phosphoenolpyruvate-dependent sugar phosphotransferase system (sugar PTS), a major carbohydrate active transport system, catalyzes the phosphorylation of incoming sugar substrates concomitantly with their translocation across the cell membrane. The enzyme II complex composed of PtsG and Crr is involved in glucose transport. The protein is PTS system glucose-specific EIIA component (crr) of Salmonella typhi.